The chain runs to 160 residues: MLTGVENSESGVIDLIKPGLDDVMKNETVQVTLVNSVLGWCKAHIVDPIKTSKIVQSRAFQITMVVLGVILLIAGLALTFVLQGQLGKNAFLFLIPAVIGLVKLLTTSVFMEKPCTPEKWRLCKRLLATTEDILDDGQINQSNTIFTTESSDVTNTATQS.

2 helical membrane-spanning segments follow: residues 62–82 and 91–111; these read ITMVVLGVILLIAGLALTFVL and FLFLIPAVIGLVKLLTTSVFM.

It localises to the membrane. This chain is Sulfur-rich protein (srp), found in Chlamydia caviae (strain ATCC VR-813 / DSM 19441 / 03DC25 / GPIC) (Chlamydophila caviae).